Here is a 1400-residue protein sequence, read N- to C-terminus: DNA-directed RNA polymerase subunit beta' (1400 aa).

4 residues coordinate Zn(2+): Cys-70, Cys-72, Cys-85, and Cys-88. Positions 460, 462, and 464 each coordinate Mg(2+). Cys-814, Cys-888, Cys-895, and Cys-898 together coordinate Zn(2+). Positions 1368 to 1400 are disordered; that stretch reads RQAKRAEAQEGPSAEQATDNLAALLNAGFSSDE.

This sequence belongs to the RNA polymerase beta' chain family. The RNAP catalytic core consists of 2 alpha, 1 beta, 1 beta' and 1 omega subunit. When a sigma factor is associated with the core the holoenzyme is formed, which can initiate transcription. It depends on Mg(2+) as a cofactor. The cofactor is Zn(2+).

It carries out the reaction RNA(n) + a ribonucleoside 5'-triphosphate = RNA(n+1) + diphosphate. DNA-dependent RNA polymerase catalyzes the transcription of DNA into RNA using the four ribonucleoside triphosphates as substrates. This Vibrio parahaemolyticus serotype O3:K6 (strain RIMD 2210633) protein is DNA-directed RNA polymerase subunit beta'.